The primary structure comprises 488 residues: Zinc finger protein 92 (488 aa).

In terms of domain architecture, KRAB spans 14 to 85 (VSFEDVSVYF…DDGMESAARS (72 aa)). 6 consecutive C2H2-type zinc fingers follow at residues 141-163 (YLCQ…RIIH), 169-191 (YECS…QRIH), 197-219 (YECG…QVIH), 225-247 (FVCR…TRIH), 253-275 (FECT…QRIH), and 281-303 (YICK…QLIH). The segment at 309–331 (FTCHEYGKAFRGLSGLSQHQRVH) adopts a C2H2-type 7; degenerate zinc-finger fold. The C2H2-type 8 zinc-finger motif lies at 337–359 (YECSECGRAFGRRANLFKHQVVH). A disordered region spans residues 387–408 (QQPQEAGEGSSAEPQPIDTNEK). The C2H2-type 9 zinc finger occupies 410-432 (QVCERCGQVFENKLLLCRHLRIH). Positions 435–488 (EDDKKQKPVISSTSVLEDKSLLSQHLEAQPTEESDSEGSVVFVYAEKPHGPSSP) are disordered.

Belongs to the krueppel C2H2-type zinc-finger protein family. Highly expressed in pancreatic islets.

The protein resides in the nucleus. In terms of biological role, KRAB domain-containing zinc-finger protein that represses B1/Alu SINE transposable elements and modulates the transcription of nearby genes in a tissue-specific manner. It regulates glucose homeostasis and lipid metabolism by modulating the expression of the endocrine cell-defining transcription factor, MAFB, in pancreatic islets and, the fat metabolism regulator, ACACB, in adipose tissue and muscle. The protein is Zinc finger protein 92 (Zfp92) of Mus musculus (Mouse).